Consider the following 275-residue polypeptide: MVRTRWQPPLRALLLLVLVWLPQSLSLDLIAYVPQITAWDLEGKITATTFSLEQPRCVFDEHVSTKDTIWLVVAFSNASRDFQNPQTAAKIPTFPQLLTDGHYMTLPLSLDQLPCEDLTGGSGGAPVLRVGNDFGCYQRPYCNAPLPSQGPYSVKFLVMDAAGPPKAETKWSNPIYLHQGKNPNSIDTWPGRRSGCMIVITSILSALAGLLLLAFLAASTTRFSSLWWPEEAPEQLRIGSFMGKRYMTHHIPPSEAATLPVGCEPGLDPLPSLSP.

The N-terminal stretch at 1-26 (MVRTRWQPPLRALLLLVLVWLPQSLS) is a signal peptide. The Lumenal portion of the chain corresponds to 27 to 196 (LDLIAYVPQI…DTWPGRRSGC (170 aa)). N-linked (GlcNAc...) asparagine glycosylation is present at N77. The helical transmembrane segment at 197-217 (MIVITSILSALAGLLLLAFLA) threads the bilayer. Residues 218 to 275 (ASTTRFSSLWWPEEAPEQLRIGSFMGKRYMTHHIPPSEAATLPVGCEPGLDPLPSLSP) are Cytoplasmic-facing.

The protein belongs to the uroplakin-3 family. In terms of assembly, heterodimer with uroplakin-1B (UPK1B). In terms of tissue distribution, expression is urothelium-specific.

The protein localises to the cell membrane. Functionally, component of the asymmetric unit membrane (AUM); a highly specialized biomembrane elaborated by terminally differentiated urothelial cells. May play an important role in AUM-cytoskeleton interaction in terminally differentiated urothelial cells. It also contributes to the formation of urothelial glycocalyx which may play an important role in preventing bacterial adherence. This Mus musculus (Mouse) protein is Uroplakin-3b (Upk3b).